The primary structure comprises 357 residues: Guanine nucleotide-binding protein alpha-16 subunit (357 aa).

A lipid anchor (N-myristoyl glycine) is attached at G2. C3 is lipidated: S-palmitoyl cysteine. The G-alpha domain maps to 32-357 (RTIKLLLLGA…RDNLRTCGLY (326 aa)). Positions 35–48 (KLLLLGAGESGKST) are G1 motif. GTP-binding positions include 40 to 47 (GAGESGKS), 175 to 181 (LRTRIKT), 200 to 204 (DVGGQ), 269 to 272 (NKKD), and A329. The Mg(2+) site is built by S47 and T181. The G2 motif stretch occupies residues 173 to 181 (DILRTRIKT). The G3 motif stretch occupies residues 196 to 205 (FLVFDVGGQR). Residues 265-272 (ILFLNKKD) form a G4 motif region. Positions 327–332 (TCATDT) are G5 motif.

The protein belongs to the G-alpha family. G proteins are composed of 3 units; alpha, beta and gamma. The alpha chain contains the guanine nucleotide binding site.

Functionally, guanine nucleotide-binding proteins (G proteins) are involved as modulators or transducers in various transmembrane signaling systems. In the 1-cell embryo, probably together with goa-1, controls nuclear rotation and spindle elongation during mitosis. During the first embryonic cell divisons, plays a role in gpr-1/2 cortical localization and in the proper orientation of EMS blastomere mitotic spindle. This is Guanine nucleotide-binding protein alpha-16 subunit (gpa-16) from Caenorhabditis elegans.